The chain runs to 942 residues: E3 ubiquitin-protein ligase HACE1 (942 aa).

ANK repeat units follow at residues 23-55 (LPDDNETAVYTLMPMVMADQHRSVSELLSNSKF), 64-93 (VKRSLLHIAANCGSVECLVLLLKKGANPNY), 97-126 (SGCTPLHLAARNGQKKCMSKLLEYSADVNI), 130-159 (EGLTAIHWLAVNGRTELLHDLVQHVSNVDV), 163-192 (MGQTALHVACQNGHKTTVQCLLDSGADINR), 196-226 (SGATPLYFACSHGQRDTAQILLMRGAKYLPD), and 228-253 (NGITPLDLCVQGGYGETCEVLIQYHP). Residues 428 to 459 (KGPDHQDATPTPSFAAAGTESRKELSTDTGDS) are disordered. Residues 447–459 (ESRKELSTDTGDS) show a composition bias toward basic and acidic residues. In terms of domain architecture, HECT spans 607–942 (NCAKLKQGIA…HCGSYGYTMA (336 aa)). Cysteine 909 acts as the Glycyl thioester intermediate in catalysis.

Its subcellular location is the golgi apparatus. It is found in the golgi stack membrane. The protein resides in the cytoplasm. It localises to the endoplasmic reticulum. The enzyme catalyses S-ubiquitinyl-[E2 ubiquitin-conjugating enzyme]-L-cysteine + [acceptor protein]-L-lysine = [E2 ubiquitin-conjugating enzyme]-L-cysteine + N(6)-ubiquitinyl-[acceptor protein]-L-lysine.. Its pathway is protein modification; protein ubiquitination. Functionally, E3 ubiquitin-protein ligase involved in Golgi membrane fusion and regulation of small GTPases. Acts as a regulator of Golgi membrane dynamics during the cell cycle: recruited to Golgi membrane by Rab proteins and regulates postmitotic Golgi membrane fusion. Acts by mediating ubiquitination during mitotic Golgi disassembly, ubiquitination serving as a signal for Golgi reassembly later, after cell division. The polypeptide is E3 ubiquitin-protein ligase HACE1 (HACE1) (Gallus gallus (Chicken)).